The sequence spans 292 residues: NAD(P)H-hydrate epimerase (292 aa).

The transit peptide at 1–52 directs the protein to the mitochondrion; the sequence is MYGLRTLFSLGLLVGGARLGARVAQVGALGGTCPLGQGLVADGNSQCKQFRT. The YjeF N-terminal domain occupies 68 to 279; the sequence is AQAVDEELFN…ALEKKYSLNL (212 aa). 122–126 contacts (6S)-NADPHX; that stretch reads NNGGD. Residues asparagine 123 and aspartate 189 each contribute to the K(+) site. (6S)-NADPHX-binding positions include 193-199 and aspartate 222; that span reads GFSFKGA. K(+) is bound at residue serine 225.

Belongs to the NnrE/AIBP family. It depends on K(+) as a cofactor.

It localises to the mitochondrion. The protein resides in the secreted. It carries out the reaction (6R)-NADHX = (6S)-NADHX. It catalyses the reaction (6R)-NADPHX = (6S)-NADPHX. Catalyzes the epimerization of the S- and R-forms of NAD(P)HX, a damaged form of NAD(P)H that is a result of enzymatic or heat-dependent hydration. This is a prerequisite for the S-specific NAD(P)H-hydrate dehydratase to allow the repair of both epimers of NAD(P)HX. The chain is NAD(P)H-hydrate epimerase from Xenopus tropicalis (Western clawed frog).